The sequence spans 359 residues: Probable mannitol dehydrogenase (359 aa).

Zn(2+) contacts are provided by C48, H70, C101, C104, C107, C115, and C164.

Belongs to the zinc-containing alcohol dehydrogenase family. Zn(2+) serves as cofactor.

It catalyses the reaction D-mannitol + NAD(+) = D-mannose + NADH + H(+). Functionally, oxidizes mannitol to mannose. Provides the initial step by which translocated mannitol is committed to central metabolism and, by regulating mannitol pool size, is important in regulating salt tolerance at the cellular level. The protein is Probable mannitol dehydrogenase (CAD) of Fragaria ananassa (Strawberry).